We begin with the raw amino-acid sequence, 115 residues long: MPPKPTYVSGGSVTQTGRSKWRLSYIPEFIWGILNQITFFFSTLIGGTVEPRRRPNNQGGGRRLAGFDGNGNVTGGSGVGGSGPSKGPDNGSNNRRGDMKNILACNSASGSUGPK.

A helical transmembrane segment spans residues 29 to 49 (FIWGILNQITFFFSTLIGGTV). The disordered stretch occupies residues 48 to 115 (TVEPRRRPNN…NSASGSUGPK (68 aa)). The segment covering 58–84 (QGGGRRLAGFDGNGNVTGGSGVGGSGP) has biased composition (gly residues). A compositionally biased stretch (polar residues) spans 104 to 115 (ACNSASGSUGPK). Position 112 (selenocysteine 112) is a non-standard amino acid, selenocysteine.

Belongs to the selenoprotein K family.

The protein resides in the membrane. The polypeptide is Selenoprotein K homolog (selk) (Dictyostelium discoideum (Social amoeba)).